The primary structure comprises 492 residues: Xaa-Pro dipeptidase (492 aa).

Ala-2 carries the post-translational modification N-acetylalanine. Position 167 is a phosphoserine (Ser-167). His-255 contributes to the a dipeptide binding site. Mn(2+) is bound by residues Asp-276, Asp-287, and His-370. A dipeptide is bound at residue Asp-287. His-377 and Arg-398 together coordinate a dipeptide. Mn(2+) is bound by residues Glu-412 and Glu-452.

The protein belongs to the peptidase M24B family. Eukaryotic-type prolidase subfamily. As to quaternary structure, homodimer. The cofactor is Mn(2+).

It carries out the reaction Xaa-L-Pro dipeptide + H2O = an L-alpha-amino acid + L-proline. Functionally, dipeptidase that catalyzes the hydrolysis of dipeptides with a prolyl (Xaa-Pro) or hydroxyprolyl residue in the C-terminal position. The preferred dipeptide substrate is Gly-Pro, but other Xaa-Pro dipeptides, such as Ala-Pro, Met-Pro, Phe-Pro, Val-Pro and Leu-Pro, can be cleaved. Plays an important role in collagen metabolism because the high level of iminoacids in collagen. The chain is Xaa-Pro dipeptidase (Pepd) from Rattus norvegicus (Rat).